A 332-amino-acid chain; its full sequence is Palmitoyltransferase PFA3 (332 aa).

Residues 1 to 13 are Cytoplasmic-facing; it reads MNLVNNFSKLFPR. A helical membrane pass occupies residues 14 to 34; it reads CLTTGLYLWSLYAIVVCIHVI. Over 35 to 37 the chain is Lumenal; sequence RAR. Residues 38–58 form a helical membrane-spanning segment; that stretch reads VVLPLVFTIAMVALYTYAKLI. At 59–147 the chain is on the cytoplasmic side; the sequence is YVGPGTTKEY…AGCVGYRNQK (89 aa). A DHHC domain is found at 104-154; that stretch reads RVCKSCSSWKPDRCHHCSTCNVCVLKMDHHCPWFAGCVGYRNQKFFIQFLI. A helical membrane pass occupies residues 148-168; it reads FFIQFLIYCTVYSILVLILSS. Residues 169 to 188 lie on the Lumenal side of the membrane; that stretch reads MEIYTWFKGEFFEVELINFT. A helical membrane pass occupies residues 189–209; sequence LLSLWLLALVVSISITIFTVF. Over 210-332 the chain is Cytoplasmic; the sequence is SISQVCQNQT…SLDVDRSNFV (123 aa).

Belongs to the DHHC palmitoyltransferase family. PFA3 subfamily. Autopalmitoylated.

Its subcellular location is the vacuole membrane. It carries out the reaction L-cysteinyl-[protein] + hexadecanoyl-CoA = S-hexadecanoyl-L-cysteinyl-[protein] + CoA. Functionally, palmitoyltransferase specific for VAC8. Palmitoylates VAC8 at one or more of its N-terminal cysteine residues, which is required for its proper membrane localization. In Candida glabrata (strain ATCC 2001 / BCRC 20586 / JCM 3761 / NBRC 0622 / NRRL Y-65 / CBS 138) (Yeast), this protein is Palmitoyltransferase PFA3 (PFA3).